The following is a 449-amino-acid chain: Kynurenine 3-monooxygenase (449 aa).

Belongs to the aromatic-ring hydroxylase family. KMO subfamily. The cofactor is FAD.

It carries out the reaction L-kynurenine + NADPH + O2 + H(+) = 3-hydroxy-L-kynurenine + NADP(+) + H2O. The protein operates within cofactor biosynthesis; NAD(+) biosynthesis; quinolinate from L-kynurenine: step 1/3. Its function is as follows. Catalyzes the hydroxylation of L-kynurenine (L-Kyn) to form 3-hydroxy-L-kynurenine (L-3OHKyn). Required for synthesis of quinolinic acid. The sequence is that of Kynurenine 3-monooxygenase from Cytophaga hutchinsonii (strain ATCC 33406 / DSM 1761 / CIP 103989 / NBRC 15051 / NCIMB 9469 / D465).